The sequence spans 173 residues: Crossover junction endodeoxyribonuclease RuvC (173 aa).

Catalysis depends on residues aspartate 8, glutamate 67, and aspartate 139. The Mg(2+) site is built by aspartate 8, glutamate 67, and aspartate 139.

Belongs to the RuvC family. Homodimer which binds Holliday junction (HJ) DNA. The HJ becomes 2-fold symmetrical on binding to RuvC with unstacked arms; it has a different conformation from HJ DNA in complex with RuvA. In the full resolvosome a probable DNA-RuvA(4)-RuvB(12)-RuvC(2) complex forms which resolves the HJ. Mg(2+) serves as cofactor.

It is found in the cytoplasm. The catalysed reaction is Endonucleolytic cleavage at a junction such as a reciprocal single-stranded crossover between two homologous DNA duplexes (Holliday junction).. Its function is as follows. The RuvA-RuvB-RuvC complex processes Holliday junction (HJ) DNA during genetic recombination and DNA repair. Endonuclease that resolves HJ intermediates. Cleaves cruciform DNA by making single-stranded nicks across the HJ at symmetrical positions within the homologous arms, yielding a 5'-phosphate and a 3'-hydroxyl group; requires a central core of homology in the junction. The consensus cleavage sequence is 5'-(A/T)TT(C/G)-3'. Cleavage occurs on the 3'-side of the TT dinucleotide at the point of strand exchange. HJ branch migration catalyzed by RuvA-RuvB allows RuvC to scan DNA until it finds its consensus sequence, where it cleaves and resolves the cruciform DNA. The sequence is that of Crossover junction endodeoxyribonuclease RuvC from Vibrio vulnificus (strain CMCP6).